The following is a 483-amino-acid chain: MVAVTEQTNVGKITQVIGPVVDAEFPSGKLPRIYNALKIQGKNPAGNDVSVTCEVQQLLGDNQVRAVAMSGTDGLVRGMDIVDTGAPISVPVGKVTLGRIFNVLGEPVDEKGDVDMSLTSPIHRPAPKLIDLETKPKVFETGIKVIDLLTPYRQGGKIGLFGGAGVGKTVIMMELINNIAINHGGVSVFAGVGERTREGNDLYNEMIESKVINPDNPEESKIALVYGQMNEPPGARMRVGLSGLTMAEYFRDVNKQDVLLFVDNIFRFVQAGSEVSALLGRMPSAVGYQPTLGTDVGDLQERITSTKEGSITSVQAVYVPADDLTDPAPATTFAHLDGTTVLSRGLASKGIYPAVDPLDSTSTMLQPGIVGEEHYNTARAVQSTLQRYKELQDIIAILGLDELSEEDRRTVDRARKIERFLSQPFFVAEVFTGSPGKYVTLKDTIKGFQMILNGELDDLPEQAFYLVGDIEEAKAKAEKLKKG.

An ATP-binding site is contributed by glycine 162 to threonine 169.

Belongs to the ATPase alpha/beta chains family. In terms of assembly, F-type ATPases have 2 components, CF(1) - the catalytic core - and CF(0) - the membrane proton channel. CF(1) has five subunits: alpha(3), beta(3), gamma(1), delta(1), epsilon(1). CF(0) has four main subunits: a(1), b(1), b'(1) and c(9-12).

The protein localises to the cellular thylakoid membrane. It catalyses the reaction ATP + H2O + 4 H(+)(in) = ADP + phosphate + 5 H(+)(out). Its function is as follows. Produces ATP from ADP in the presence of a proton gradient across the membrane. The catalytic sites are hosted primarily by the beta subunits. This is ATP synthase subunit beta from Rippkaea orientalis (strain PCC 8801 / RF-1) (Cyanothece sp. (strain PCC 8801)).